Consider the following 275-residue polypeptide: MNLEEKKVFLKKNKKIKEFFIADDVKISSFRNEIMSMEHPIFSLKGGDTRIRIYEYGNVIIKIKPTADGIANIFDKDIWIYSISKLQSEINKNNSKISKAICFTPYDFFISTKRNKSGRSYEELRKALSRLKGTIIETNIFYSKNKKKSLSFGLIDSWKILEEKKGKLNIGMIEIILPEWLYVALKNKRILKISEDYFKIRKSIDRRIYEIARKHCGNQKFFKISTKKLYLKTGSTSLLKMFKHNLKRLVRKNNLPDYNIRYNLYKDIITFSKRF.

The BRCT domain maps to 98 to 198; that stretch reads SKAICFTPYD…RILKISEDYF (101 aa).

This Wigglesworthia glossinidia brevipalpis protein is Putative replication protein.